A 103-amino-acid polypeptide reads, in one-letter code: MYAVFQSGGKQHRVSEGQTVRLEKLDIATGETVEFAEVLMIANGEEVKIGVPFVDGGVIKAEVVAHGRGEKVKIVKFRRRKHYRKQHGHRQWFTDVKITGISA.

The protein belongs to the bacterial ribosomal protein bL21 family. Part of the 50S ribosomal subunit. Contacts protein L20.

Functionally, this protein binds to 23S rRNA in the presence of protein L20. In Shigella sonnei (strain Ss046), this protein is Large ribosomal subunit protein bL21.